The sequence spans 443 residues: dTDP-4-dehydro-6-deoxy-alpha-D-glucopyranose 2,3-dehydratase (443 aa).

DTDP-4-dehydro-6-deoxy-alpha-D-glucose is bound by residues W35, 118-122 (TFSNY), S157, W260, R325, 341-343 (QCN), 346-347 (NL), and 377-380 (EGGR).

Belongs to the hexose 2,3-dehydratase family. Homodimer.

The catalysed reaction is dTDP-4-dehydro-6-deoxy-alpha-D-glucose = dTDP-3,4-didehydro-2,6-dideoxy-alpha-D-glucose + H2O. It functions in the pathway antibiotic biosynthesis; granaticin biosynthesis. Involved in the biosynthesis of the 2,6-deoxysugar, dTDP-L-rhodinose, attached to the benzoisochromane quinone chromophore to produce the aglycone antibiotics granaticin and granaticin B. Catalyzes the removal of the hydroxyl group at position C-2 of the hexose ring of dTDP-4-dehydro-6-deoxy-alpha-D-glucopyranose, and the oxidation of the hydroxyl group at position C-3 to form a carbonyl functionality. The product of the reaction, dTDP-2,6-dideoxy-D-glycero-hex-2-enos-4-ulose, is a highly unstable diketosugar, which spontaneously forms dTDP-3,4-didehydro-2,6-dideoxy-alpha-D-glucose. The sequence is that of dTDP-4-dehydro-6-deoxy-alpha-D-glucopyranose 2,3-dehydratase from Streptomyces violaceoruber.